The following is a 248-amino-acid chain: Large ribosomal subunit protein uL1 (248 aa).

Belongs to the universal ribosomal protein uL1 family. Part of the 50S ribosomal subunit.

Functionally, binds directly to 23S rRNA. The L1 stalk is quite mobile in the ribosome, and is involved in E site tRNA release. Its function is as follows. Protein L1 is also a translational repressor protein, it controls the translation of the L11 operon by binding to its mRNA. In Orientia tsutsugamushi (strain Boryong) (Rickettsia tsutsugamushi), this protein is Large ribosomal subunit protein uL1.